The following is a 287-amino-acid chain: 4-hydroxybenzoate octaprenyltransferase (287 aa).

9 helical membrane passes run 22–42 (IGTY…SDGW), 45–65 (LQLL…GCVI), 95–115 (AINL…MLSW), 116–136 (STIY…FMKR), 140–160 (LPQL…FSEA), 162–182 (GEIP…TIAY), 214–234 (IGFL…ILAF), 237–257 (PYQL…LLIV), and 264–284 (CFQA…GIAI).

The protein belongs to the UbiA prenyltransferase family. Mg(2+) serves as cofactor.

The protein localises to the cell inner membrane. The enzyme catalyses all-trans-octaprenyl diphosphate + 4-hydroxybenzoate = 4-hydroxy-3-(all-trans-octaprenyl)benzoate + diphosphate. Its pathway is cofactor biosynthesis; ubiquinone biosynthesis. Functionally, catalyzes the prenylation of para-hydroxybenzoate (PHB) with an all-trans polyprenyl group. Mediates the second step in the final reaction sequence of ubiquinone-8 (UQ-8) biosynthesis, which is the condensation of the polyisoprenoid side chain with PHB, generating the first membrane-bound Q intermediate 3-octaprenyl-4-hydroxybenzoate. The chain is 4-hydroxybenzoate octaprenyltransferase from Colwellia psychrerythraea (strain 34H / ATCC BAA-681) (Vibrio psychroerythus).